The primary structure comprises 436 residues: Anaerobic glycerol-3-phosphate dehydrogenase subunit B (436 aa).

This sequence belongs to the anaerobic G-3-P dehydrogenase subunit B family. Composed of a catalytic GlpA/B dimer and of membrane bound GlpC. The cofactor is FMN.

The catalysed reaction is a quinone + sn-glycerol 3-phosphate = dihydroxyacetone phosphate + a quinol. It participates in polyol metabolism; glycerol degradation via glycerol kinase pathway; glycerone phosphate from sn-glycerol 3-phosphate (anaerobic route): step 1/1. Conversion of glycerol 3-phosphate to dihydroxyacetone. Uses fumarate or nitrate as electron acceptor. The sequence is that of Anaerobic glycerol-3-phosphate dehydrogenase subunit B from Vibrio cholerae serotype O1 (strain ATCC 39315 / El Tor Inaba N16961).